The primary structure comprises 444 residues: 1,4-beta-D-glucan glucohydrolase (444 aa).

Residue glutamate 164 is the Proton donor of the active site. The active-site Nucleophile is the glutamate 349.

Belongs to the glycosyl hydrolase 1 family. As to quaternary structure, monomer.

It carries out the reaction Hydrolysis of (1-&gt;4)-linkages in (1-&gt;4)-beta-D-glucans, to remove successive glucose units.. The enzyme catalyses Hydrolysis of terminal, non-reducing beta-D-glucosyl residues with release of beta-D-glucose.. The protein operates within glycan metabolism; cellulose degradation. It participates in glycan metabolism; beta-D-glucan degradation. Its activity is regulated as follows. Activated by glucose up to 200 mM when p-nitrophenyl-beta-glucoside is used as the substrate. This activation by end product concentrations may be due to a transglycosylation activity of the enzyme. Its function is as follows. Broad substrate specificity glycosidase. Releases glucose from soluble glucooligomers, with a preference for longer oligomers; acts more readily on cellotetraose than on cellobiose. Displays similar activities towards the disaccharides lactose and cellobiose. Is also able to hydrolyze various aryl-beta-glycosides in vitro. This is 1,4-beta-D-glucan glucohydrolase from Thermotoga neapolitana (strain ATCC 49049 / DSM 4359 / NBRC 107923 / NS-E).